A 506-amino-acid polypeptide reads, in one-letter code: Histidine ammonia-lyase (506 aa).

The segment at residues 143-145 (ASG) is a cross-link (5-imidazolinone (Ala-Gly)). Serine 144 carries the post-translational modification 2,3-didehydroalanine (Ser).

This sequence belongs to the PAL/histidase family. Post-translationally, contains an active site 4-methylidene-imidazol-5-one (MIO), which is formed autocatalytically by cyclization and dehydration of residues Ala-Ser-Gly.

Its subcellular location is the cytoplasm. It carries out the reaction L-histidine = trans-urocanate + NH4(+). It functions in the pathway amino-acid degradation; L-histidine degradation into L-glutamate; N-formimidoyl-L-glutamate from L-histidine: step 1/3. The polypeptide is Histidine ammonia-lyase (Salmonella arizonae (strain ATCC BAA-731 / CDC346-86 / RSK2980)).